The primary structure comprises 339 residues: Homocysteine S-methyltransferase 2 (339 aa).

The region spanning 12–326 is the Hcy-binding domain; it reads AVRRWVDAAG…NTIRAIHRTL (315 aa). Positions 244, 311, and 312 each coordinate Zn(2+).

Monomer. Zn(2+) serves as cofactor.

The enzyme catalyses S-methyl-L-methionine + L-homocysteine = 2 L-methionine + H(+). Catalyzes methyl transfer from S-methylmethionine (SMM) to adenosyl-L-homocysteine (AdoMet). SMM degradation (by HMT-1, HMT-2, HMT-3 and HMT-4) and biosynthesis (by MMT1) constitute the SMM cycle in plants, which is probably required to achieve short term control of AdoMet level. This Zea mays (Maize) protein is Homocysteine S-methyltransferase 2 (HMT-2).